The sequence spans 196 residues: Small ribosomal subunit protein uS4c (196 aa).

A disordered region spans residues 16 to 40 (GALPGLTRKTPKSGSNLKKKFHSGK). Positions 89–152 (MRLDNTLFRL…RSKDLVRNSI (64 aa)) constitute an S4 RNA-binding domain.

This sequence belongs to the universal ribosomal protein uS4 family. As to quaternary structure, part of the 30S ribosomal subunit. Contacts protein S5. The interaction surface between S4 and S5 is involved in control of translational fidelity.

The protein resides in the plastid. Its subcellular location is the chloroplast. Its function is as follows. One of the primary rRNA binding proteins, it binds directly to 16S rRNA where it nucleates assembly of the body of the 30S subunit. With S5 and S12 plays an important role in translational accuracy. This is Small ribosomal subunit protein uS4c (rps4) from Anthoxanthum odoratum (Sweet vernal grass).